The primary structure comprises 366 residues: S-adenosylmethionine:tRNA ribosyltransferase-isomerase (366 aa).

Belongs to the QueA family. In terms of assembly, monomer.

It localises to the cytoplasm. The catalysed reaction is 7-aminomethyl-7-carbaguanosine(34) in tRNA + S-adenosyl-L-methionine = epoxyqueuosine(34) in tRNA + adenine + L-methionine + 2 H(+). The protein operates within tRNA modification; tRNA-queuosine biosynthesis. In terms of biological role, transfers and isomerizes the ribose moiety from AdoMet to the 7-aminomethyl group of 7-deazaguanine (preQ1-tRNA) to give epoxyqueuosine (oQ-tRNA). In Methylorubrum populi (strain ATCC BAA-705 / NCIMB 13946 / BJ001) (Methylobacterium populi), this protein is S-adenosylmethionine:tRNA ribosyltransferase-isomerase.